A 427-amino-acid chain; its full sequence is L-rhamnose isomerase (427 aa).

Residues His-264, Asp-296, and Asp-298 each contribute to the Mn(2+) site.

Belongs to the rhamnose isomerase family. It depends on Mn(2+) as a cofactor.

The protein resides in the cytoplasm. It catalyses the reaction L-rhamnopyranose = L-rhamnulose. It participates in carbohydrate degradation; L-rhamnose degradation; glycerone phosphate from L-rhamnose: step 1/3. Catalyzes the interconversion of L-rhamnose and L-rhamnulose. This is L-rhamnose isomerase from Rhodopirellula baltica (strain DSM 10527 / NCIMB 13988 / SH1).